The primary structure comprises 1115 residues: Scavenger receptor cysteine-rich type 1 protein M130 (1115 aa).

The N-terminal stretch at 1-46 is a signal peptide; it reads MDKLRMVLHENSGSADFRRCSAHLSSFTFAVVAVLSACLVTSSLGG. Residues 47–1044 lie on the Extracellular side of the membrane; the sequence is KDKELRLTGG…ESLHATGRSS (998 aa). SRCR domains follow at residues 51–151, 158–258, 265–365, 372–472, 477–577, 582–682, 718–818, 823–925, and 928–1028; these read LRLT…VTCS, MGLV…VICL, LRVV…VTCS, LRLK…ITCS, PRLV…VVCS, IRLV…VICS, LRLV…VICS, LRLI…ITCA, and IRLQ…VTCS. Disulfide bonds link cysteine 76-cysteine 140, cysteine 89-cysteine 150, cysteine 120-cysteine 130, cysteine 183-cysteine 247, cysteine 196-cysteine 257, cysteine 227-cysteine 237, cysteine 290-cysteine 354, cysteine 303-cysteine 364, cysteine 334-cysteine 344, cysteine 397-cysteine 461, cysteine 410-cysteine 471, cysteine 441-cysteine 451, cysteine 502-cysteine 566, cysteine 515-cysteine 576, cysteine 546-cysteine 556, cysteine 607-cysteine 671, cysteine 620-cysteine 681, cysteine 651-cysteine 661, cysteine 743-cysteine 807, cysteine 756-cysteine 817, cysteine 787-cysteine 797, cysteine 863-cysteine 924, and cysteine 894-cysteine 904. N-linked (GlcNAc...) asparagine glycosylation is present at asparagine 105. Asparagine 139 carries N-linked (GlcNAc...) asparagine glycosylation. N-linked (GlcNAc...) asparagine glycosylation occurs at asparagine 936. 3 disulfides stabilise this stretch: cysteine 953–cysteine 1017, cysteine 966–cysteine 1027, and cysteine 997–cysteine 1007. Residues 1045–1065 traverse the membrane as a helical segment; that stretch reads FVALAIFGVILLACLIAFLIW. Residues 1066 to 1115 are Cytoplasmic-facing; it reads TQKRRQRQRLSVFSGGENSVHQIQYREMNSCLKADETDMLNPSGDHSEVQ. The Internalization signal motif lies at 1090 to 1093; the sequence is YREM.

Interacts with CSNK2B. Post-translationally, a soluble form (sCD163) is produced by proteolytic shedding which can be induced by lipopolysaccharide, phorbol ester and Fc region of immunoglobulin gamma. This cleavage is dependent on protein kinase C and tyrosine kinases and can be blocked by protease inhibitors. The shedding is inhibited by the tissue inhibitor of metalloproteinase TIMP3, and thus probably induced by membrane-bound metalloproteinases ADAMs. In terms of processing, phosphorylated. As to expression, expressed in monocytes and macrophages. Detected only in one population of monocytes (CD163+) which is in advanced maturation stage.

Its subcellular location is the secreted. The protein localises to the cell membrane. Functionally, involved in clearance and endocytosis of hemoglobin/haptoglobin complexes by macrophages and may thereby protect tissues from free hemoglobin-mediated oxidative damage. May play a role in the uptake and recycling of iron, via endocytosis of hemoglobin/haptoglobin and subsequent breakdown of heme. Binds hemoglobin/haptoglobin complexes in a calcium-dependent and pH-dependent manner. Induces a cascade of intracellular signals that involves tyrosine kinase-dependent calcium mobilization, inositol triphosphate production and secretion of IL6 and CSF1. May play a role in the process of infection of porcine monocytes/macrophages by African swine fever virus (ASFV). In case of porcine reproductive and respiratory syndrome virus (PRRSV), serves mediates virion attachment and plays a role in viral entry. In terms of biological role, after shedding, the soluble form (sCD163) may play an anti-inflammatory role. This is Scavenger receptor cysteine-rich type 1 protein M130 (CD163) from Sus scrofa (Pig).